The sequence spans 95 residues: Small ribosomal subunit protein bS6 (95 aa).

The protein belongs to the bacterial ribosomal protein bS6 family.

In terms of biological role, binds together with bS18 to 16S ribosomal RNA. The protein is Small ribosomal subunit protein bS6 of Symbiobacterium thermophilum (strain DSM 24528 / JCM 14929 / IAM 14863 / T).